Consider the following 1958-residue polypeptide: Rho GTPase-activating protein 21 (1958 aa).

The tract at residues 1 to 42 (MMATRRTGLSEGDGDKLKACEVSKNKDGKEQSETVSLSEDET) is disordered. The segment covering 13-32 (DGDKLKACEVSKNKDGKEQS) has biased composition (basic and acidic residues). Residues serine 36 and serine 57 each carry the phosphoserine modification. In terms of domain architecture, PDZ spans 50 to 159 (TVTLKRTSQG…TLELSVMPKD (110 aa)). 3 stretches are compositionally biased toward polar residues: residues 286 to 295 (SNRNNHTGPS), 306 to 325 (SEQT…LSIP), and 418 to 436 (ASQS…TTLQ). Disordered regions lie at residues 286 to 325 (SNRN…LSIP) and 418 to 458 (ASQS…QRSV). Positions 448-458 (PQSVQIRQRSV) are enriched in low complexity. At serine 459 the chain carries Phosphoserine. 2 positions are modified to omega-N-methylarginine: arginine 554 and arginine 575. Phosphoserine is present on residues serine 612, serine 616, and serine 625. Residues 659 to 687 (SLLNQQTWVRTDSAPDQQVETGKSPSLSG) are compositionally biased toward polar residues. The disordered stretch occupies residues 659–751 (SLLNQQTWVR…PSGRQTPQPL (93 aa)). The residue at position 717 (serine 717) is a Phosphoserine. Residues 729–742 (LDNKEAVILREKPP) show a composition bias toward basic and acidic residues. Phosphothreonine is present on threonine 747. Residues serine 857, serine 862, and serine 881 each carry the phosphoserine modification. The tract at residues 859-885 (DHESVGPPSLDAQPNSKTERSKSYDEG) is disordered. The span at 875–885 (KTERSKSYDEG) shows a compositional bias: basic and acidic residues. At tyrosine 882 the chain carries Phosphotyrosine. Phosphoserine occurs at positions 924, 926, 954, 1099, and 1115. The segment at 930–1097 (SDAAKEGWLH…AKSEPKTQSP (168 aa)) is interaction with ARF1 and ARF6. The region spanning 931–1040 (DAAKEGWLHF…WIKTIQESSN (110 aa)) is the PH domain. The segment at 1086–1133 (LGAKSEPKTQSPHSPKEESERKLLSKDDTSPPKDKGTWRKGIPSIMRK) is disordered. Positions 1099–1122 (SPKEESERKLLSKDDTSPPKDKGT) are enriched in basic and acidic residues. Positions 1147–1339 (VRLDDCPPAH…TLIQHHDWFF (193 aa)) constitute a Rho-GAP domain. Disordered regions lie at residues 1348–1401 (LTTV…GSGK), 1418–1575 (SRKR…KHSE), 1598–1642 (SLDS…SEFP), and 1655–1686 (RGKL…SSLD). Polar residues predominate over residues 1349 to 1362 (TTVQEESTVDSQPV). Over residues 1383–1401 (SDSATSDSTKSKGSWGSGK) the composition is skewed to low complexity. Phosphoserine is present on residues serine 1418, serine 1432, and serine 1433. Composition is skewed to basic and acidic residues over residues 1441-1466 (FFKK…ETLG) and 1477-1493 (NSTR…KISL). A Glycyl lysine isopeptide (Lys-Gly) (interchain with G-Cter in SUMO) cross-link involves residue lysine 1444. Serine 1504 carries the phosphoserine modification. The residue at position 1516 (threonine 1516) is a Phosphothreonine. Position 1527 is a phosphoserine (serine 1527). The span at 1544–1559 (SDSGTLLSTSSQASLA) shows a compositional bias: low complexity. An interaction with CTNNA1 region spans residues 1592–1861 (SATYLTSLDS…WLARERLRTS (270 aa)). The segment covering 1603-1612 (RLSPEVQSVA) has biased composition (polar residues). Positions 1624-1634 (SELISEGRPVE) are enriched in basic and acidic residues. A Phosphoserine modification is found at serine 1669. The segment covering 1671–1686 (GSELSCTEGSLTSSLD) has biased composition (polar residues). Threonine 1682 is modified (phosphothreonine). Serine 1742 bears the Phosphoserine mark. Residues 1860-1958 (TSTSDLSRGE…GSKAEFHPCL (99 aa)) form a disordered region. The span at 1874–1909 (QTENPSTREIATTDTPLSLHCNTGSSSSTLASTNRP) shows a compositional bias: polar residues. Position 1917 is a phosphoserine (serine 1917). Over residues 1918–1931 (PDQINGESFQNVSK) the composition is skewed to polar residues.

Interacts with GTP-bound ARF1 and ARF6. Interacts with CTNNA1. Sumoylated with SUMO2 and SUMO3 in proliferating lymphocytes. As to expression, widely expressed with higher expression in brain, heart, skeletal muscle and placenta.

The protein localises to the golgi apparatus membrane. Its subcellular location is the cell junction. The protein resides in the cytoplasmic vesicle membrane. It is found in the cytoplasm. It localises to the cytoskeleton. Functionally, functions as a GTPase-activating protein (GAP) for RHOA and CDC42. Downstream partner of ARF1 which may control Golgi apparatus structure and function. Also required for CTNNA1 recruitment to adherens junctions. The polypeptide is Rho GTPase-activating protein 21 (ARHGAP21) (Homo sapiens (Human)).